The primary structure comprises 2594 residues: Protein sevenless (2594 aa).

Disordered stretches follow at residues 1 to 34 (MFWR…PKRL) and 49 to 92 (KMST…RVRR). Over 1–2141 (MFWREDAAQQ…FVSPEKRGSL (2141 aa)) the chain is Extracellular. Residues 9-26 (QQQQQQQQQQQQQQQQQQ) show a composition bias toward low complexity. Asn-77, Asn-401, Asn-508, Asn-532, Asn-641, Asn-667, Asn-778, Asn-797, Asn-874, and Asn-980 each carry an N-linked (GlcNAc...) asparagine glycan. 2 Fibronectin type-III domains span residues 358 to 462 (ETTQ…TPME) and 468 to 560 (APII…SPLE). In terms of domain architecture, Fibronectin type-III 3 spans 838–938 (PPAPRELRAL…APLATRTWPL (101 aa)). Residues 1024 to 1066 (GLLYWTDLARDCVQRLDPFSGERELLPIFGARHLALDSAQGHL) form an LDL-receptor class B repeat. Fibronectin type-III domains lie at 1227–1317 (LAVP…QLDT) and 1324–1430 (QPRR…VQSV). N-linked (GlcNAc...) asparagine glycans are attached at residues Asn-1257, Asn-1344, Asn-1382, Asn-1577, Asn-1587, Asn-1665, Asn-1752, Asn-1776, Asn-1824, Asn-1908, Asn-1966, and Asn-2088. Fibronectin type-III domains are found at residues 1711-1814 (TAAA…TLHT), 1821-1920 (APRN…SYAP), 1922-2010 (PPLQ…TLGD), and 2014-2132 (APGR…AEPF). Residues 2142-2162 (VLAIIAPAAIVSSCVLALVLV) form a helical membrane-spanning segment. Over 2163–2594 (RKLQKRRHRA…LYANEGISGL (432 aa)) the chain is Cytoplasmic. Residues 2224-2495 (LTLLRFLGSG…KRCLSTLQAL (272 aa)) form the Protein kinase domain. Residues 2230–2238 (LGSGAFGEV) and Lys-2257 contribute to the ATP site. Residue Asp-2355 is the Proton acceptor of the active site. Tyr-2391 carries the post-translational modification Phosphotyrosine; by autocatalysis. The interval 2543–2568 (TVSTTDADTTGSPTTPTAPTTPTTTT) is disordered. A compositionally biased stretch (low complexity) spans 2545 to 2568 (STTDADTTGSPTTPTAPTTPTTTT).

Belongs to the protein kinase superfamily. Tyr protein kinase family. Insulin receptor subfamily.

Its subcellular location is the cell membrane. It catalyses the reaction L-tyrosyl-[protein] + ATP = O-phospho-L-tyrosyl-[protein] + ADP + H(+). Its function is as follows. Receptor for an extracellular signal required to instruct a cell to differentiate into a R7 photoreceptor. The ligand for Sev is the Boss (Bride of Sevenless) protein. This Drosophila virilis (Fruit fly) protein is Protein sevenless (sev).